The primary structure comprises 782 residues: Cysteine-rich protein 2-binding protein (782 aa).

Phosphoserine is present on S4. Residues 13–33 (RHDDEATRTSTSEGLEEGEVE) form a disordered region. K231 is subject to N6-acetyllysine. The interval 251 to 282 (PVESAMELKEKRSRTQEAKDIRRAQKEAAGFL) is disordered. Positions 256-276 (MELKEKRSRTQEAKDIRRAQK) are enriched in basic and acidic residues. A Phosphoserine modification is found at S285. The residue at position 292 (K292) is an N6-acetyllysine. The span at 315 to 335 (LSSSDRTPLTSPSPSPSLDFS) shows a compositional bias: low complexity. Disordered regions lie at residues 315–346 (LSSS…HSAT) and 400–460 (VRKK…EPRY). Basic and acidic residues-rich tracts occupy residues 405 to 426 (RGPE…RMDI) and 446 to 459 (KPQL…KEPR). The residue at position 416 (S416) is a Phosphoserine. The region spanning 638–782 (LDYCYVRPNH…KHAFFLRLRR (145 aa)) is the N-acetyltransferase domain.

In terms of assembly, interacts with the LIM 1 domain of CSRP2. Component of the ADA2A-containing complex (ATAC), composed of CSRP2BP, KAT2A, TADA2L, TADA3L, ZZ3, MBIP, WDR5, YEATS2, CCDC101 and DR1. In the complex, it probably interacts directly with KAT2A, MBIP and WDR5. In terms of tissue distribution, expressed in skeletal muscle, heart, lung, placenta, brain, liver, pancreas and kidney. High expression in skeletal muscle and heart. Lower expression in lung.

It localises to the nucleus. The protein localises to the cytoplasm. Its function is as follows. Component of the ATAC complex, a complex with histone acetyltransferase activity on histones H3 and H4. May function as a scaffold for the ATAC complex to promote ATAC complex stability. Has also weak histone acetyltransferase activity toward histone H4. Required for the normal progression through G1 and G2/M phases of the cell cycle. This Homo sapiens (Human) protein is Cysteine-rich protein 2-binding protein.